Here is a 552-residue protein sequence, read N- to C-terminus: MIRRFLRLYSIKRNTHLILEDLQSIKFNKDDLKAIDSALKLVTVKQTTSSSKLSRTRAKQEYIDRKLEVIRNIFPGEPDSEYVSMEPPNDLKNPYFDVYSKTVLDEDGNIKFAGTERLSVTKLLTKRWCELNQMYDIYSRLPIFEHRQLKVGKVEHEKLEKAIHGVAPAVEDFMETYEWELAEDDTHQLADNWFQCIHRLLTLFSSGEAREILCHGYIDSRSCQLIEGQVKDDRDILISGIIDHVVLFHVNNNKPKSLEPALREKNGFDLLKIISFLGDTIPQAEDLKIAVGDVKTRPRAIVPNHASVVRASKLQVMYYRFFLENLGKDPEIAYQKLILNATRRDINIDTPINISNLIYFMEIDPAIRPDLERIMLGEPIGFEPFDRYYQSELENGDEDNIAMPSEIGEANEYNLSQYADLTMEESTLEKYGTFYQKWANPPTLRYFAARLAQLYGTLLPLLSNDLMIEYYTGDYKFYTDKFQYDSALLKQECHSSSQFWFGKRSVEPIVPTKKNLVTFCKYCDFHDVCGWRANGNKMFKQLGPTLEEISKL.

Cysteine 129, cysteine 520, cysteine 523, and cysteine 529 together coordinate [4Fe-4S] cluster.

This sequence belongs to the EXO5 family. In terms of assembly, monomer. The cofactor is Mg(2+). Requires [4Fe-4S] cluster as cofactor.

Its subcellular location is the mitochondrion. Functionally, single strand DNA specific 5' exonuclease involved in mitochondrial DNA replication and recombination. Releases dinucleotides as main products of catalysis. Has the capacity to slide across 5'double-stranded DNA or 5'RNA sequences and resumes cutting two nucleotides downstream of the double-stranded-to-single-stranded junction or RNA-to-DNA junction, respectively. The sequence is that of Exonuclease V, mitochondrial (EXO5) from Kluyveromyces lactis (strain ATCC 8585 / CBS 2359 / DSM 70799 / NBRC 1267 / NRRL Y-1140 / WM37) (Yeast).